A 339-amino-acid polypeptide reads, in one-letter code: MRVYYDRDADLNLIKGKKVAVVGYGSQGHAHALNMRDSGVKEVVVALRPGSATAKKAEAEGFKVMSPADAAKWADVVMMLTPDELQGDIYRESLADNMKHGAALLFAHGLNVHFNLIEPRPDLDVLMVAPKGPGHTVRSEYQRGGGVPTLIAIAQDASGNAHDLGLSYASAIGGGRAGVIETTFKEECETDLFGEQVVLCGGLVELIRAGFETLVEAGYAPEMAYFECLHEVKLIVDLIYEGGIANMNYSISNTAEYGEYVTGPRIITPETKAEMKRVLTDIQTGKFTRDWMLENKVNQASFKATRARANAHPIEEVGEKLRAMMPWIKAKALVDKTKN.

A KARI N-terminal Rossmann domain is found at 1 to 182 (MRVYYDRDAD…GGGRAGVIET (182 aa)). Residues 24–27 (YGSQ), arginine 48, serine 51, threonine 53, and 83–86 (DELQ) contribute to the NADP(+) site. Residue histidine 108 is part of the active site. Glycine 134 contacts NADP(+). Residues 183–328 (TFKEECETDL…EKLRAMMPWI (146 aa)) form the KARI C-terminal knotted domain. The Mg(2+) site is built by aspartate 191, glutamate 195, glutamate 227, and glutamate 231. A substrate-binding site is contributed by serine 252.

Belongs to the ketol-acid reductoisomerase family. It depends on Mg(2+) as a cofactor.

The catalysed reaction is (2R)-2,3-dihydroxy-3-methylbutanoate + NADP(+) = (2S)-2-acetolactate + NADPH + H(+). It catalyses the reaction (2R,3R)-2,3-dihydroxy-3-methylpentanoate + NADP(+) = (S)-2-ethyl-2-hydroxy-3-oxobutanoate + NADPH + H(+). It participates in amino-acid biosynthesis; L-isoleucine biosynthesis; L-isoleucine from 2-oxobutanoate: step 2/4. The protein operates within amino-acid biosynthesis; L-valine biosynthesis; L-valine from pyruvate: step 2/4. Involved in the biosynthesis of branched-chain amino acids (BCAA). Catalyzes an alkyl-migration followed by a ketol-acid reduction of (S)-2-acetolactate (S2AL) to yield (R)-2,3-dihydroxy-isovalerate. In the isomerase reaction, S2AL is rearranged via a Mg-dependent methyl migration to produce 3-hydroxy-3-methyl-2-ketobutyrate (HMKB). In the reductase reaction, this 2-ketoacid undergoes a metal-dependent reduction by NADPH to yield (R)-2,3-dihydroxy-isovalerate. The chain is Ketol-acid reductoisomerase (NADP(+)) from Xanthobacter autotrophicus (strain ATCC BAA-1158 / Py2).